The chain runs to 533 residues: Metal transporter nramp1 homolog (533 aa).

Residues 1-33 (MTPRIESEESAPLVNKNNNNNNDNNNNNNVDEE) form a disordered region. The Cytoplasmic segment spans residues 1-68 (MTPRIESEES…PNIDKPDSKW (68 aa)). The span at 14 to 29 (VNKNNNNNNDNNNNNN) shows a compositional bias: low complexity. The chain crosses the membrane as a helical span at residues 69–89 (INFKTLWAFTGPGFLMSIAYL). The Extracellular portion of the chain corresponds to 90-101 (DPGNLESDIQAG). A helical transmembrane segment spans residues 102-122 (AMAGYQLLWVLFWSTVIGFWL). Over 123–158 (QMLASRLGVVTGKHLAEHCREQYPKTPRLLLWLMTE) the chain is Cytoplasmic. A helical membrane pass occupies residues 159-179 (LAIIGSDIQEVIGTAIALQIL). The Extracellular segment spans residues 180 to 182 (SNG). The helical transmembrane segment at 183–203 (HIPLWAGVLFTAADTFTFLFL) threads the bilayer. The Cytoplasmic segment spans residues 204–212 (EKYGIRKLE). A helical membrane pass occupies residues 213 to 233 (AFFCSLIAIMAISFGVEYIIS). Topologically, residues 234-256 (KPDQIEVVKGVFIPLCSQNNISQ) are extracellular. N-linked (GlcNAc...) asparagine glycosylation occurs at N253. Residues 257–277 (AVGILGAVVMPHNIYLHSALV) traverse the membrane as a helical segment. The Cytoplasmic portion of the chain corresponds to 278 to 302 (QSREIDRKSETQVKIANKYNRLESA). Residues 303–323 (FALIISFIINLLLVSVFAKGF) traverse the membrane as a helical segment. Residues 324–348 (YGETTEIGLSSAADFLMDKYGKVAK) are Extracellular-facing. The helical transmembrane segment at 349 to 368 (YIWAIGLFSAGQCSTMTGTY) threads the bilayer. Residues 369–387 (SGQFVMEGFLKLKIAPWKR) lie on the Cytoplasmic side of the membrane. Residues 388-408 (LLITRCTAIVPAMVVAILSTS) form a helical membrane-spanning segment. Over 409-415 (HLDSLDQ) the chain is Extracellular. A helical membrane pass occupies residues 416–436 (WLNILQSIQLPFAVVPVLLFT). Residues 437 to 457 (SSEKIMGSKFKNHWLNNQFVR) lie on the Cytoplasmic side of the membrane. The chain crosses the membrane as a helical span at residues 458–478 (FLSLLIIAINIYLIITFSMQI). Residues 479-481 (SES) lie on the Extracellular side of the membrane. Residues 482–502 (AWMISIVSISFFFYFIFIVYL) traverse the membrane as a helical segment. Over 503 to 533 (SMGQENFNSMTKKIKNLFNNNSNQTYNNINY) the chain is Cytoplasmic.

The protein belongs to the NRAMP family.

It localises to the membrane. Its function is as follows. Depletes iron from the phagolysosome in an ATP-dependent process. May rather act as a symporter of protons and metal cations in an ATP-dependent process. Nramp1 overexpression protected cells from L.pneumophila infection. The protein is Metal transporter nramp1 homolog (nramp1) of Dictyostelium discoideum (Social amoeba).